We begin with the raw amino-acid sequence, 161 residues long: Nucleotide-binding protein XAC3671 (161 aa).

Belongs to the YajQ family.

Its function is as follows. Nucleotide-binding protein. The protein is Nucleotide-binding protein XAC3671 of Xanthomonas axonopodis pv. citri (strain 306).